Here is a 266-residue protein sequence, read N- to C-terminus: CD82 antigen (266 aa).

Residues 1 to 11 (MGAGCVKVTKY) are Cytoplasmic-facing. Cysteine 5 is lipidated: S-palmitoyl cysteine. A helical membrane pass occupies residues 12 to 32 (FLFLFNLLFFILGAVILGFGV). Topologically, residues 33 to 53 (WILADKSSFISVLQTSSSSLQ) are extracellular. The chain crosses the membrane as a helical span at residues 54 to 72 (VGAYVFIGVGAITMLMGFL). At 73–83 (GCIGAVNEVRC) the chain is on the cytoplasmic side. Cysteine 74 carries S-palmitoyl cysteine lipidation. A helical transmembrane segment spans residues 84 to 110 (LLGLYFVFLLLILIAQVTVEVLFYFNA). Over 111–227 (NKLKQEMGNT…KAQAWLQENF (117 aa)) the chain is Extracellular. 5 N-linked (GlcNAc...) asparagine glycosylation sites follow: asparagine 127, asparagine 131, asparagine 157, asparagine 166, and asparagine 197. Residues 228–249 (GILLGVCAGVAVIELLGLFLSI) form a helical membrane-spanning segment. The Cytoplasmic segment spans residues 250–266 (CLCRYIHSEDYSKVPKY).

It belongs to the tetraspanin (TM4SF) family. As to quaternary structure, forms homooligomers. Interacts directly with IGSF8. Interacts with EGFR. Interacts with VEGFA and PDGFA. Interacts with ITGA4. Interacts with ITGA6; this interaction reduces ITGA6 cell surface expression. Interacts with ITGB1. Interacts with TLR4; this interaction inhibits TLR4-mediated signaling pathway. Interacts with TLR9. Interacts with PLAUR. In terms of processing, palmitoylated. Palmitoylation contributes to oligomerization and surface expression.

It localises to the cell membrane. Functionally, structural component of specialized membrane microdomains known as tetraspanin-enriched microdomains (TERMs), which act as platforms for receptor clustering and signaling. Participates thereby in diverse biological functions such as cell signal transduction, adhesion, migration and protein trafficking. Acts as a attenuator of EGF signaling, facilitating ligand-induced endocytosis of the receptor and its subsequent desensitization. Mechanistically, modulates ligand-induced ubiquitination and trafficking of EGFR via E3 ligase CBL phosphorylation by PKC. Increases cell-matrix adhesion by regulating the membrane organization of integrin alpha4/ITA4. Modulates adhesion and suppresses cell migration through other integrins such as the alpha6/ITGA6 and beta1/ITGB1. Decreases cell-associated plasminogen activation by interfering with the interaction between urokinase-type plasminogen activator/PLAU and its receptor PLAUR. Associates with CD4 or CD8 and delivers costimulatory signals for the TCR/CD3 pathway. Plays a role in the restrains phagocyte migration but supports macrophage activation. Plays a role in TLR9 trafficking to acidified CpG-containing compartments by controlling interaction between TLR9 and VAMP3 and subsequent myddosome assembly. Inhibits LPS-induced inflammatory response by preventing binding of LPS to TLR4 on the cell surface. Plays a role in the activation of macrophages into anti-inflammatory phenotypes. Independently of Toll-like receptor (TLR) signaling, is recruited to pathogen-containing phagosomes prior to fusion with lysosomes and participates in antigen presentation. Also acts to control angiogenesis and switch angiogenic milieu to quiescent state by binding and sequestering VEGFA and PDGFA to inhibit the signaling they trigger via their respective cell surface receptor. The sequence is that of CD82 antigen (Cd82) from Rattus norvegicus (Rat).